Consider the following 95-residue polypeptide: Aspartyl/glutamyl-tRNA(Asn/Gln) amidotransferase subunit C (95 aa).

It belongs to the GatC family. In terms of assembly, heterotrimer of A, B and C subunits.

The enzyme catalyses L-glutamyl-tRNA(Gln) + L-glutamine + ATP + H2O = L-glutaminyl-tRNA(Gln) + L-glutamate + ADP + phosphate + H(+). It catalyses the reaction L-aspartyl-tRNA(Asn) + L-glutamine + ATP + H2O = L-asparaginyl-tRNA(Asn) + L-glutamate + ADP + phosphate + 2 H(+). Allows the formation of correctly charged Asn-tRNA(Asn) or Gln-tRNA(Gln) through the transamidation of misacylated Asp-tRNA(Asn) or Glu-tRNA(Gln) in organisms which lack either or both of asparaginyl-tRNA or glutaminyl-tRNA synthetases. The reaction takes place in the presence of glutamine and ATP through an activated phospho-Asp-tRNA(Asn) or phospho-Glu-tRNA(Gln). This chain is Aspartyl/glutamyl-tRNA(Asn/Gln) amidotransferase subunit C, found in Chromobacterium violaceum (strain ATCC 12472 / DSM 30191 / JCM 1249 / CCUG 213 / NBRC 12614 / NCIMB 9131 / NCTC 9757 / MK).